Consider the following 77-residue polypeptide: Large ribosomal subunit protein uL24 (77 aa).

A disordered region spans residues Lys-42–Gly-61.

The protein belongs to the universal ribosomal protein uL24 family. As to quaternary structure, part of the 50S ribosomal subunit.

Its function is as follows. One of two assembly initiator proteins, it binds directly to the 5'-end of the 23S rRNA, where it nucleates assembly of the 50S subunit. Functionally, one of the proteins that surrounds the polypeptide exit tunnel on the outside of the subunit. In Lactobacillus acidophilus (strain ATCC 700396 / NCK56 / N2 / NCFM), this protein is Large ribosomal subunit protein uL24.